We begin with the raw amino-acid sequence, 380 residues long: RNA binding protein fox-1 homolog 2 (380 aa).

Composition is skewed to polar residues over residues methionine 1–threonine 20 and asparagine 36–glutamate 56. A disordered region spans residues methionine 1–isoleucine 117. Residues serine 72 to asparagine 102 are compositionally biased toward low complexity. The RRM domain occupies lysine 110 to alanine 186.

It is found in the nucleus. The protein resides in the cytoplasm. In terms of biological role, RNA-binding protein that regulates alternative splicing events by binding to 5'-UGCAUGU-3' elements. Regulates alternative splicing of tissue-specific exons. In Xenopus tropicalis (Western clawed frog), this protein is RNA binding protein fox-1 homolog 2 (rbfox2).